A 181-amino-acid polypeptide reads, in one-letter code: MSQVSAEDKLDYVKSKIGEYPNFPKEGILFRDIFGALTDPKACVYLRDLLVQYIRQSQPEVEVIVGLDSRGFLFNLLLATELGVGYTPIRKKGKLAGEVVSVEYQLEYGSDTFELQRTAIQPGQKVVIVDDLLATGGSLLAASELVRKVGGVVLESLVVMELVGLDGRKKLDCKVHSLIKY.

The protein belongs to the purine/pyrimidine phosphoribosyltransferase family. In terms of assembly, homodimer.

The protein localises to the cytoplasm. It carries out the reaction AMP + diphosphate = 5-phospho-alpha-D-ribose 1-diphosphate + adenine. It participates in purine metabolism; AMP biosynthesis via salvage pathway; AMP from adenine: step 1/1. Catalyzes a salvage reaction resulting in the formation of AMP, that is energically less costly than de novo synthesis. This Drosophila pseudoobscura pseudoobscura (Fruit fly) protein is Adenine phosphoribosyltransferase (Aprt).